Consider the following 158-residue polypeptide: Chromobox protein homolog 7 (158 aa).

The 59-residue stretch at 11–69 folds into the Chromo domain; that stretch reads FAVESIRKKRVRKGKVEYLVKWKGWPPKYSTWEPEEHILDPRLVMAYEEKEERDRASGY. The tract at residues 60–127 is disordered; that stretch reads KEERDRASGY…WTPTLPSSEV (68 aa). Over residues 68–78 the composition is skewed to basic residues; that stretch reads GYRKRGPKPRR.

Component of a PRC1-like complex. Distinct PRC1-like core complexes are composed of a RING1 subunit (RING1B or RING1A), one of the six PCGF proteins (PCGF1-6), one PHC protein (PHC1-3) and one of the CBX proteins (CBX2, CBX4, CBX6, CBX7 or CBX8). The composition of the PRC1 complex may differ between the PRC1 complex in pluripotent embryonic stem cells containing RNF2, CBX7 and PCGF2, and the PRC1 complex in differentiating cells containing RNF2, CBX2, CBX4 and BMI1. Interacts with RING1. Interacts with RNF2, PHC1 and PCGF2. Interacts (via chromodomain) with histone H3K9Me3 and H3K27me3. Interacts with H3K9Me2 and H4K20Me1. Interacts (via chromodomain) with single-stranded and double-stranded RNA; RNA binding seems to be required for the localization to chromatin. Interacts with PCGF1, PCGF3, PCGF5 and PCGF6. Expressed in embryonic stem cells.

The protein localises to the nucleus. It localises to the chromosome. Component of a Polycomb group (PcG) multiprotein PRC1-like complex, a complex class required to maintain the transcriptionally repressive state of many genes, including Hox genes, throughout development. PcG PRC1 complex acts via chromatin remodeling and modification of histones; it mediates monoubiquitination of histone H2A 'Lys-119', rendering chromatin heritably changed in its expressibility. Promotes histone H3 trimethylation at 'Lys-9' (H3K9me3). Binds to histone H3 trimethylated at 'Lys-9' (H3K9me3) or at 'Lys-27' (H3K27me3). Trimethylation at 'Lys-27' (H3K27me3) is important for chromatin recruitment. May possibly also bind trimethylated lysine residues in other proteins (in vitro). Binds non-coding, single-stranded RNA and double-stranded RNA. Plays a role in the timely repression of differentiation-specific genes in pluripotent embryonic stem cells to maintain the undifferentiated state. Regulator of cellular lifespan by maintaining the repression of CDKN2A, but not by inducing telomerase activity. This chain is Chromobox protein homolog 7 (Cbx7), found in Mus musculus (Mouse).